The sequence spans 133 residues: MNYMPGTASLIEDIDKKHLVLLRDGRTLIGFLRSIDQFANLVLHQTVERIHVGKKYGDIPRGIFVVRGENVVLLGEIDLEKESDTPLQQVSIEEILEEQRVEQQTKLEAEKLKVQALKDRGLSIPRADTLDEY.

One can recognise a Sm domain in the interval 5–80; the sequence is PGTASLIEDI…VVLLGEIDLE (76 aa). Phosphoserine is present on serine 123. Threonine 129 carries the phosphothreonine modification.

This sequence belongs to the snRNP Sm proteins family. As to quaternary structure, interacts with SLBP; interaction with SLBP occurs when histone mRNA is being rapidly degraded during the S phase. LSm subunits form a heteromer with a donut shape.

Its subcellular location is the cytoplasm. The protein localises to the P-body. In terms of biological role, plays a role in the degradation of histone mRNAs, the only eukaryotic mRNAs that are not polyadenylated. Probably also part of an LSm subunits-containing complex involved in the general process of mRNA degradation. In Homo sapiens (Human), this protein is U6 snRNA-associated Sm-like protein LSm1 (LSM1).